A 90-amino-acid chain; its full sequence is UPF0235 protein CPn_0497/CP_0257/CPj0497/CpB0517 (90 aa).

This sequence belongs to the UPF0235 family.

The sequence is that of UPF0235 protein CPn_0497/CP_0257/CPj0497/CpB0517 from Chlamydia pneumoniae (Chlamydophila pneumoniae).